The chain runs to 193 residues: Ion-translocating oxidoreductase complex subunit B (193 aa).

The tract at residues 1-26 (MSTMLIAVILLTLLALFFGVLLGFAA) is hydrophobic. A 4Fe-4S domain is found at 32–90 (EGNPIVDELEAILPQTQCGQCGYPGCRPYAEAIANGDKVNKCPPGGTATMEKLANLMGV). Residues Cys49, Cys52, Cys57, Cys73, Cys114, Cys117, Cys120, Cys124, Cys144, Cys147, Cys150, and Cys154 each contribute to the [4Fe-4S] cluster site. 2 consecutive 4Fe-4S ferredoxin-type domains span residues 105-134 (KVAY…GAGK) and 136-164 (MHTV…MIPV).

This sequence belongs to the 4Fe4S bacterial-type ferredoxin family. RnfB subfamily. The complex is composed of six subunits: RnfA, RnfB, RnfC, RnfD, RnfE and RnfG. The cofactor is [4Fe-4S] cluster.

It localises to the cell inner membrane. Its function is as follows. Part of a membrane-bound complex that couples electron transfer with translocation of ions across the membrane. This chain is Ion-translocating oxidoreductase complex subunit B, found in Shewanella sp. (strain ANA-3).